Reading from the N-terminus, the 877-residue chain is MDDDDSGIQEEPAPPPPPPPPPPPPPPLRRLLTATRSGGSRWVDGSEVGSSESAPWSLDGDRSLRLSVDSAASAGGASGGGGGGGPLSRASSGAFRRRFGKQPRRVDSLDVEAMSVRGAHGHSSKEISMLSTVAMAFQTLGVVYGDMGTSPLYVFSDVFSKVPIKSEVEILGALSLVMYTIALIPFAKYVFIVLKANDNGEGGTFALYSLICRYAKVSLLPNQQRVDEDISSFRLKLPTPELERALSVKESLEKNPVFKNILLFLVLMGTSMVIGDGILTPSMSVMSAVSGLQGRVPGFGTDAVVIVSILFLVLLFSVQRFGTGKVGFMFAPILALWFINLGTIGIYNLAKYDISVVRAFNPVYIYLFFQTNGIKAWSALGGCVLCITGAEAMFADLGHFSVKSIQVAFTAVVFPCLLIAYMGQAAYLMKYPFAVERIFYDSVPEILFWPVFVIATLAAMIASQAMISATFSCIKQAMALGCFPRIKIIHTSKKVMGQIYIPVMNWFLMVMCIIIVATFRSTNDIANAYGIAEVGVMMVSTALVTLVMLLIWQTNLFLVMCFPVIFGSVEFVYLTAVLSKIQEGGWLPLAFSSLFLCIMYTWNYGSVLKYQSEMRGKISLDFILDLGSTLGTVRVPGIGLVYNELVQGIPSIFGHLLVTLPAMHSTIVFVCIKYVPVPYVPFEERFLFRRIGQKDYHMFRCVARYGYKDVRKEEHGFFEQLLVETLEKFLRKESQEMALEASAMAVERDDVSVVSDIPSSPVEAGDLHVPLLSDQRLGDGTQTFITEGNTPVLPTSSISEEDPSLEYELESLREAIASGFTYLLAHGDVRARKESFFTKKFIINYFYAFLRRNCRAGTATLKVPHSNIMRVGMTYMV.

Disordered stretches follow at residues 1–60 (MDDD…SLDG) and 72–92 (ASAG…RASS). At 1-126 (MDDDDSGIQE…RGAHGHSSKE (126 aa)) the chain is on the cytoplasmic side. Over residues 12 to 28 (PAPPPPPPPPPPPPPPL) the composition is skewed to pro residues. Over residues 76–86 (GASGGGGGGGP) the composition is skewed to gly residues. Residues 127-147 (ISMLSTVAMAFQTLGVVYGDM) form a helical membrane-spanning segment. Residues 148-173 (GTSPLYVFSDVFSKVPIKSEVEILGA) lie on the Extracellular side of the membrane. The chain crosses the membrane as a helical span at residues 174 to 194 (LSLVMYTIALIPFAKYVFIVL). At 195-260 (KANDNGEGGT…SLEKNPVFKN (66 aa)) the chain is on the cytoplasmic side. The chain crosses the membrane as a helical span at residues 261-281 (ILLFLVLMGTSMVIGDGILTP). The Extracellular portion of the chain corresponds to 282–295 (SMSVMSAVSGLQGR). Residues 296-316 (VPGFGTDAVVIVSILFLVLLF) traverse the membrane as a helical segment. Over 317-325 (SVQRFGTGK) the chain is Cytoplasmic. Residues 326 to 346 (VGFMFAPILALWFINLGTIGI) traverse the membrane as a helical segment. Residues 347 to 379 (YNLAKYDISVVRAFNPVYIYLFFQTNGIKAWSA) lie on the Extracellular side of the membrane. A helical transmembrane segment spans residues 380-400 (LGGCVLCITGAEAMFADLGHF). The Cytoplasmic portion of the chain corresponds to 401 to 406 (SVKSIQ). A helical membrane pass occupies residues 407 to 427 (VAFTAVVFPCLLIAYMGQAAY). Topologically, residues 428–441 (LMKYPFAVERIFYD) are extracellular. The chain crosses the membrane as a helical span at residues 442–462 (SVPEILFWPVFVIATLAAMIA). The Cytoplasmic segment spans residues 463 to 498 (SQAMISATFSCIKQAMALGCFPRIKIIHTSKKVMGQ). The helical transmembrane segment at 499–519 (IYIPVMNWFLMVMCIIIVATF) threads the bilayer. Residues 520-524 (RSTND) are Extracellular-facing. A helical membrane pass occupies residues 525-545 (IANAYGIAEVGVMMVSTALVT). Over 546–555 (LVMLLIWQTN) the chain is Cytoplasmic. The chain crosses the membrane as a helical span at residues 556–578 (LFLVMCFPVIFGSVEFVYLTAVL). At 579 to 583 (SKIQE) the chain is on the extracellular side. The chain crosses the membrane as a helical span at residues 584–604 (GGWLPLAFSSLFLCIMYTWNY). Residues 605-877 (GSVLKYQSEM…IMRVGMTYMV (273 aa)) lie on the Cytoplasmic side of the membrane.

It belongs to the HAK/KUP transporter (TC 2.A.72.3) family.

It is found in the membrane. In terms of biological role, high-affinity potassium transporter. In Oryza sativa subsp. japonica (Rice), this protein is Potassium transporter 23 (HAK23).